Consider the following 93-residue polypeptide: Large ribosomal subunit protein uL23cz/uL23cy (93 aa).

It belongs to the universal ribosomal protein uL23 family. As to quaternary structure, part of the 50S ribosomal subunit.

The protein localises to the plastid. It is found in the chloroplast. Its function is as follows. Binds to 23S rRNA. The chain is Large ribosomal subunit protein uL23cz/uL23cy (rpl23-A) from Populus alba (White poplar).